The primary structure comprises 419 residues: UDP-N-acetylglucosamine 1-carboxyvinyltransferase (419 aa).

Phosphoenolpyruvate is bound at residue 22–23 (KN). Arg-91 contributes to the UDP-N-acetyl-alpha-D-glucosamine binding site. Cys-115 acts as the Proton donor in catalysis. 2-(S-cysteinyl)pyruvic acid O-phosphothioketal is present on Cys-115. Residues 120 to 124 (RPVDL), 160 to 163 (KVSV), Asp-305, and Val-327 contribute to the UDP-N-acetyl-alpha-D-glucosamine site.

This sequence belongs to the EPSP synthase family. MurA subfamily.

The protein resides in the cytoplasm. It catalyses the reaction phosphoenolpyruvate + UDP-N-acetyl-alpha-D-glucosamine = UDP-N-acetyl-3-O-(1-carboxyvinyl)-alpha-D-glucosamine + phosphate. Its pathway is cell wall biogenesis; peptidoglycan biosynthesis. Its function is as follows. Cell wall formation. Adds enolpyruvyl to UDP-N-acetylglucosamine. The chain is UDP-N-acetylglucosamine 1-carboxyvinyltransferase from Salmonella gallinarum (strain 287/91 / NCTC 13346).